Reading from the N-terminus, the 260-residue chain is MQDDLKNAPIGFFDSGLGGLSVLRKALEMMPNENYIYYGDSKHAPYGEKTPQEIRSLSFNAIEFLIKKGAKAIVIACNTATSAAAHDLREYYKDIPIIGIEPALKPAIKLHETGSVIVMATKATLTQEKFKNLMDKYGEHREVIPLPCPGLVEFIEAGDLEGEDVKNFLREKLNPYMDREISSIVLGCTHYPFVKDVIQDLVGEKVDIIDGSSGTIRELKRRLEENNMESESKKKGNLDIFNSLEDKKILELSKKLIEIK.

Residues 14 to 15 and 46 to 47 each bind substrate; these read DS and YG. Catalysis depends on Cys77, which acts as the Proton donor/acceptor. 78 to 79 contacts substrate; that stretch reads NT. The Proton donor/acceptor role is filled by Cys188. 189–190 provides a ligand contact to substrate; that stretch reads TH.

Belongs to the aspartate/glutamate racemases family.

The enzyme catalyses L-glutamate = D-glutamate. It functions in the pathway cell wall biogenesis; peptidoglycan biosynthesis. Functionally, provides the (R)-glutamate required for cell wall biosynthesis. The chain is Glutamate racemase from Clostridium perfringens (strain 13 / Type A).